The chain runs to 143 residues: Transcriptional regulator MraZ (143 aa).

SpoVT-AbrB domains lie at 5-47 (EYEH…TLEE) and 76-119 (AIEV…DRET).

Belongs to the MraZ family. As to quaternary structure, forms oligomers.

The protein localises to the cytoplasm. The protein resides in the nucleoid. The chain is Transcriptional regulator MraZ from Staphylococcus haemolyticus (strain JCSC1435).